We begin with the raw amino-acid sequence, 105 residues long: Nucleoid-associated protein RPC_4847 (105 aa).

It belongs to the YbaB/EbfC family. Homodimer.

The protein resides in the cytoplasm. It is found in the nucleoid. Binds to DNA and alters its conformation. May be involved in regulation of gene expression, nucleoid organization and DNA protection. The protein is Nucleoid-associated protein RPC_4847 of Rhodopseudomonas palustris (strain BisB18).